The following is a 425-amino-acid chain: tRNA(Ile)-lysidine synthase (425 aa).

27-32 contributes to the ATP binding site; it reads SGGLDS.

Belongs to the tRNA(Ile)-lysidine synthase family.

The protein resides in the cytoplasm. It carries out the reaction cytidine(34) in tRNA(Ile2) + L-lysine + ATP = lysidine(34) in tRNA(Ile2) + AMP + diphosphate + H(+). Its function is as follows. Ligates lysine onto the cytidine present at position 34 of the AUA codon-specific tRNA(Ile) that contains the anticodon CAU, in an ATP-dependent manner. Cytidine is converted to lysidine, thus changing the amino acid specificity of the tRNA from methionine to isoleucine. The chain is tRNA(Ile)-lysidine synthase from Streptococcus pneumoniae (strain JJA).